The chain runs to 150 residues: Small ribosomal subunit protein eS19S (150 aa).

This sequence belongs to the eukaryotic ribosomal protein eS19 family.

The chain is Small ribosomal subunit protein eS19S (RPS19S) from Ascaris suum (Pig roundworm).